The sequence spans 195 residues: FK506-binding protein 2 (195 aa).

The N-terminal stretch at 1–19 (MKAALFLSALASTAVGVVA) is a signal peptide. The PPIase FKBP-type domain maps to 39–127 (GDGVHMHYRG…VFETELVGID (89 aa)). A Prevents secretion from ER motif is present at residues 192–195 (HEEL).

This sequence belongs to the FKBP-type PPIase family. FKBP2 subfamily.

Its subcellular location is the endoplasmic reticulum. It catalyses the reaction [protein]-peptidylproline (omega=180) = [protein]-peptidylproline (omega=0). Its activity is regulated as follows. Inhibited by both FK506 and rapamycin. In terms of biological role, PPIases accelerate the folding of proteins. It catalyzes the cis-trans isomerization of proline imidic peptide bonds in oligopeptides. This is FK506-binding protein 2 (FPR2) from Gibberella zeae (strain ATCC MYA-4620 / CBS 123657 / FGSC 9075 / NRRL 31084 / PH-1) (Wheat head blight fungus).